Reading from the N-terminus, the 116-residue chain is S-adenosylmethionine decarboxylase proenzyme (116 aa).

Serine 63 (schiff-base intermediate with substrate; via pyruvic acid) is an active-site residue. Pyruvic acid (Ser); by autocatalysis is present on serine 63. Histidine 68 (proton acceptor; for processing activity) is an active-site residue. Cysteine 83 serves as the catalytic Proton donor; for catalytic activity.

This sequence belongs to the prokaryotic AdoMetDC family. Type 1 subfamily. Heterotetramer of two alpha and two beta chains arranged as a dimer of alpha/beta heterodimers. Pyruvate is required as a cofactor. Post-translationally, is synthesized initially as an inactive proenzyme. Formation of the active enzyme involves a self-maturation process in which the active site pyruvoyl group is generated from an internal serine residue via an autocatalytic post-translational modification. Two non-identical subunits are generated from the proenzyme in this reaction, and the pyruvate is formed at the N-terminus of the alpha chain, which is derived from the carboxyl end of the proenzyme. The post-translation cleavage follows an unusual pathway, termed non-hydrolytic serinolysis, in which the side chain hydroxyl group of the serine supplies its oxygen atom to form the C-terminus of the beta chain, while the remainder of the serine residue undergoes an oxidative deamination to produce ammonia and the pyruvoyl group blocking the N-terminus of the alpha chain.

The enzyme catalyses S-adenosyl-L-methionine + H(+) = S-adenosyl 3-(methylsulfanyl)propylamine + CO2. It participates in amine and polyamine biosynthesis; S-adenosylmethioninamine biosynthesis; S-adenosylmethioninamine from S-adenosyl-L-methionine: step 1/1. Its function is as follows. Catalyzes the decarboxylation of S-adenosylmethionine to S-adenosylmethioninamine (dcAdoMet), the propylamine donor required for the synthesis of the polyamines spermine and spermidine from the diamine putrescine. The chain is S-adenosylmethionine decarboxylase proenzyme from Clostridium botulinum (strain ATCC 19397 / Type A).